The chain runs to 302 residues: B3 domain-containing protein At3g17010 (302 aa).

Residues Phe21–Asn116 constitute a DNA-binding region (TF-B3 1). Residues Pro123–Ser192 form a disordered region. The span at Ile135–Ser174 shows a compositional bias: basic and acidic residues. Basic residues predominate over residues Ser175 to Ser192. The segment at residues Val199 to Asn292 is a DNA-binding region (TF-B3 2).

The protein resides in the nucleus. In Arabidopsis thaliana (Mouse-ear cress), this protein is B3 domain-containing protein At3g17010.